The chain runs to 479 residues: Ribosomal RNA small subunit methyltransferase F (479 aa).

Residues 125–131, E149, D176, and D194 contribute to the S-adenosyl-L-methionine site; that span reads AAAPGSK. The active-site Nucleophile is C247.

This sequence belongs to the class I-like SAM-binding methyltransferase superfamily. RsmB/NOP family.

The protein localises to the cytoplasm. It catalyses the reaction cytidine(1407) in 16S rRNA + S-adenosyl-L-methionine = 5-methylcytidine(1407) in 16S rRNA + S-adenosyl-L-homocysteine + H(+). Functionally, specifically methylates the cytosine at position 1407 (m5C1407) of 16S rRNA. The sequence is that of Ribosomal RNA small subunit methyltransferase F from Salmonella paratyphi C (strain RKS4594).